Consider the following 308-residue polypeptide: GATA transcription factor 10 (308 aa).

Residues 214–268 (DGIVRICTHCETITTPQWRQGPSGPKTLCNACGVRFKSGRLVPEYRPASSPTFIP) form a GATA-type zinc finger.

The protein belongs to the type IV zinc-finger family. Class A subfamily.

It is found in the nucleus. In terms of biological role, transcriptional activator that specifically binds 5'-GATA-3' or 5'-GAT-3' motifs within gene promoters. May be involved in the regulation of some light-responsive genes. The protein is GATA transcription factor 10 (GATA10) of Arabidopsis thaliana (Mouse-ear cress).